The following is a 150-amino-acid chain: UPF0098 protein CPn_0877/CP_0992/CPj0877/CpB0906 (150 aa).

Belongs to the UPF0098 family.

This chain is UPF0098 protein CPn_0877/CP_0992/CPj0877/CpB0906, found in Chlamydia pneumoniae (Chlamydophila pneumoniae).